The sequence spans 89 residues: MMAVATADELRSLSGDELVDKLREAKEELFNLRFQAATGQLSNNRRLRAVRRDIAKIYTVMRERELGITGDPALVAGAADDDATQSERA.

The protein belongs to the universal ribosomal protein uL29 family.

The polypeptide is Large ribosomal subunit protein uL29 (Frankia alni (strain DSM 45986 / CECT 9034 / ACN14a)).